The sequence spans 484 residues: Mitogen-activated protein kinase SLT2/MPK1 (484 aa).

In terms of domain architecture, Protein kinase spans 23 to 318 (FQLIKEIGHG…VDEALEHPYL (296 aa)). ATP-binding positions include 29–37 (IGHGAYGIV) and K54. D153 (proton acceptor) is an active-site residue. The residue at position 190 (T190) is a Phosphothreonine. Positions 190–192 (TEY) match the TXY motif. Residue Y192 is modified to Phosphotyrosine. The span at 383–392 (QQQQQQQQQP) shows a compositional bias: low complexity. 2 disordered regions span residues 383–403 (QQQQ…AAAS) and 426–464 (IHSQ…PQND).

The protein belongs to the protein kinase superfamily. CMGC Ser/Thr protein kinase family. MAP kinase subfamily. In terms of assembly, interacts with RLM1. Mg(2+) serves as cofactor. In terms of processing, dually phosphorylated on Thr-190 and Tyr-192, which activates the enzyme.

The enzyme catalyses L-seryl-[protein] + ATP = O-phospho-L-seryl-[protein] + ADP + H(+). The catalysed reaction is L-threonyl-[protein] + ATP = O-phospho-L-threonyl-[protein] + ADP + H(+). Activated by tyrosine and threonine phosphorylation by MKK1 and MKK2. Functionally, serine/threonine protein kinase involved in a signal transduction pathway that plays a role in yeast cell morphogenesis and cell growth. This pathway seems to start by SMP3; then involve the kinase PKC1 that may act the BCK1 kinase that then phosphorylates MKK1 and MKK2 which themselves phosphorylate the SLT2/MPK1 kinase which itself then phosphorylates and activates the transcription factor RLM1. Directly phosphorylates BCY1 upon TOR complex 1 (TORC1) inhibition. The protein is Mitogen-activated protein kinase SLT2/MPK1 (SLT2) of Saccharomyces cerevisiae (strain ATCC 204508 / S288c) (Baker's yeast).